Reading from the N-terminus, the 150-residue chain is 5-hydroxytryptamine receptor 1B (150 aa).

Residues 1 to 83 lie on the Extracellular side of the membrane; that stretch reads VEARSRILKQ…AARERKATKT (83 aa). Residues 27–40 are compositionally biased toward polar residues; it reads DSPGSTSSVTSINS. A disordered region spans residues 27 to 50; sequence DSPGSTSSVTSINSRAPDLPSESG. Residues 84–105 form a helical membrane-spanning segment; the sequence is LGIILGAFIVCWLPFFIISLAM. Topologically, residues 106-115 are cytoplasmic; that stretch reads PICKDACWFH. The chain crosses the membrane as a helical span at residues 116–138; it reads LAIFDFFTWLGYLNSLINPIIYT. Residues 133-137 carry the NPxxY motif; important for ligand-induced conformation changes and signaling motif; it reads NPIIY. Topologically, residues 139–150 are extracellular; it reads MFNEDFKQAFHK.

The protein belongs to the G-protein coupled receptor 1 family. In terms of assembly, homodimer. Heterodimer with HTR1D. Post-translationally, phosphorylated. Desensitization of the receptor may be mediated by its phosphorylation. In terms of processing, palmitoylated.

The protein resides in the cell membrane. G-protein coupled receptor for 5-hydroxytryptamine (serotonin). Also functions as a receptor for ergot alkaloid derivatives, various anxiolytic and antidepressant drugs and other psychoactive substances, such as lysergic acid diethylamide (LSD). Ligand binding causes a conformation change that triggers signaling via guanine nucleotide-binding proteins (G proteins) and modulates the activity of downstream effectors, such as adenylate cyclase. HTR1B is coupled to G(i)/G(o) G alpha proteins and mediates inhibitory neurotransmission by inhibiting adenylate cyclase activity. Arrestin family members inhibit signaling via G proteins and mediate activation of alternative signaling pathways. Regulates the release of 5-hydroxytryptamine, dopamine and acetylcholine in the brain, and thereby affects neural activity, nociceptive processing, pain perception, mood and behavior. Besides, plays a role in vasoconstriction of cerebral arteries. This is 5-hydroxytryptamine receptor 1B (HTR1B) from Sus scrofa (Pig).